A 70-amino-acid polypeptide reads, in one-letter code: Cold shock-like protein CspH (70 aa).

The 61-residue stretch at 7 to 67 (GIVKTFDCKS…GLRGPTAANV (61 aa)) folds into the CSD domain.

The protein resides in the cytoplasm. This Salmonella typhi protein is Cold shock-like protein CspH (cspH).